The sequence spans 67 residues: DNA-directed RNA polymerase subunit omega (67 aa).

This sequence belongs to the RNA polymerase subunit omega family. In terms of assembly, the RNAP catalytic core consists of 2 alpha, 1 beta, 1 beta' and 1 omega subunit. When a sigma factor is associated with the core the holoenzyme is formed, which can initiate transcription.

The catalysed reaction is RNA(n) + a ribonucleoside 5'-triphosphate = RNA(n+1) + diphosphate. Functionally, promotes RNA polymerase assembly. Latches the N- and C-terminal regions of the beta' subunit thereby facilitating its interaction with the beta and alpha subunits. The polypeptide is DNA-directed RNA polymerase subunit omega (Dictyoglomus turgidum (strain DSM 6724 / Z-1310)).